The following is a 793-amino-acid chain: Caldesmon (793 aa).

The residue at position 12 (Arg-12) is a Phosphoserine. Glu-21 bears the Phosphotyrosine mark. Disordered regions lie at residues 26–94, 108–407, and 434–458; these read AYQR…DDEA, QKRL…IKGE, and KKQG…KPTF. Residues 26–207 are myosin and calmodulin-binding; that stretch reads AYQRNDDDEE…PKRGSIGENQ (182 aa). Over residues 47-56 the composition is skewed to basic and acidic residues; that stretch reads QERLRQKQEE. Residues 60-74 show a composition bias toward polar residues; it reads GQVTDQVEVNAQNSV. The span at 108-122 shows a compositional bias: basic and acidic residues; the sequence is QKRLQEALERQKEFD. A Phosphoserine modification is found at Ser-129. Basic and acidic residues-rich tracts occupy residues 146–162 and 173–188; these read TTEK…RYEI and QKND…KEDK. A phosphoserine mark is found at Glu-196 and Ser-202. Residues Ile-203 and Glu-209 each participate in a glycyl lysine isopeptide (Lys-Gly) (interchain with G-Cter in SUMO2) cross-link. Basic and acidic residues-rich tracts occupy residues 236 to 407 and 435 to 458; these read EEPK…IKGE and KQGE…KPTF. A run of 3 repeats spans residues 319 to 332, 333 to 346, and 347 to 360. The tract at residues 319-375 is 3 X 14 AA tandem repeats of E-E-E-K-R-A-A-E-E-R-Q-R-I-K; the sequence is EEEKRAAEERQRIKEEEKRAAEERQRIKEEEKRAAEERQRIKEEEKRAAEERQRARA. Lys-459 participates in a covalent cross-link: Glycyl lysine isopeptide (Lys-Gly) (interchain with G-Cter in SUMO2). The tract at residues 492–640 is disordered; it reads KSQNGEFMTH…KKPFKCFTPK (149 aa). Basic and acidic residues-rich tracts occupy residues 532–558 and 566–633; these read AGKR…KQKQ and EELK…DKKP. The tropomyosin-binding stretch occupies residues 564 to 621; the sequence is ELEELKKKREERRKVLEEEEQRRKQEEADRKLREEEEKRRLKEEIERRRAEAAEKRQK. Ser-643 is subject to Phosphoserine. A Glycyl lysine isopeptide (Lys-Gly) (interchain with G-Cter in SUMO2) cross-link involves residue Lys-645. A strong actin-binding region spans residues 653–686; that stretch reads LNKSVQKSSGVKSTHQAAIVSKIDSRLEQYTSAI. Ser-656 carries the phosphoserine modification. A tropomyosin-binding region spans residues 664–674; sequence KSTHQAAIVSK. Disordered regions lie at residues 687–706, 721–740, and 747–793; these read EGTK…PVPA, VFSS…GLKV, and NEWL…PTKV. The interval 716-722 is calmodulin-binding; that stretch reads WEKGNVF. Polar residues predominate over residues 721–733; it reads VFSSPTAAGTPNK. At Ser-724 the chain carries Phosphoserine. 2 positions are modified to phosphothreonine: Thr-730 and Thr-753. A Phosphoserine modification is found at Ser-759. Basic and acidic residues predominate over residues 765–784; that stretch reads SDLRPGDVSSKRNLWEKQSV. The segment at 768–793 is weak actin-binding; the sequence is RPGDVSSKRNLWEKQSVDKVTSPTKV. Ser-789 carries the post-translational modification Phosphoserine.

The protein belongs to the caldesmon family. Post-translationally, in non-muscle cells, phosphorylation by CDK1 during mitosis causes caldesmon to dissociate from microfilaments. Phosphorylation reduces caldesmon binding to actin, myosin, and calmodulin as well as its inhibition of actomyosin ATPase activity. Phosphorylation also occurs in both quiescent and dividing smooth muscle cells with similar effects on the interaction with actin and calmodulin and on microfilaments reorganization. CDK1-mediated phosphorylation promotes Schwann cell migration during peripheral nerve regeneration. In terms of tissue distribution, high-molecular-weight caldesmon (isoform 1) is predominantly expressed in smooth muscles, whereas low-molecular-weight caldesmon (isoforms 2, 3, 4 and 5) are widely distributed in non-muscle tissues and cells. Not expressed in skeletal muscle or heart.

The protein resides in the cytoplasm. It is found in the cytoskeleton. The protein localises to the myofibril. It localises to the stress fiber. Its function is as follows. Actin- and myosin-binding protein implicated in the regulation of actomyosin interactions in smooth muscle and nonmuscle cells (could act as a bridge between myosin and actin filaments). Stimulates actin binding of tropomyosin which increases the stabilization of actin filament structure. In muscle tissues, inhibits the actomyosin ATPase by binding to F-actin. This inhibition is attenuated by calcium-calmodulin and is potentiated by tropomyosin. Interacts with actin, myosin, two molecules of tropomyosin and with calmodulin. Also plays an essential role during cellular mitosis and receptor capping. Involved in Schwann cell migration during peripheral nerve regeneration. In Homo sapiens (Human), this protein is Caldesmon (CALD1).